Here is a 609-residue protein sequence, read N- to C-terminus: Spore-specific protein YSW1 (609 aa).

Positions 1–24 (MSSLADTVEGSEAKRGRFSNNALT) are disordered. 2 positions are modified to phosphoserine: Ser-159 and Ser-160. Residues 162–225 (DENESHFTDA…DDEFSPATPP (64 aa)) are disordered. A compositionally biased stretch (polar residues) spans 169–179 (TDANSHVMQSK). A compositionally biased stretch (basic and acidic residues) spans 200 to 209 (LKKEYEKSFE). Residues 210–219 (EYSDDSDDEF) show a composition bias toward acidic residues.

This is Spore-specific protein YSW1 (YSW1) from Saccharomyces cerevisiae (strain ATCC 204508 / S288c) (Baker's yeast).